Reading from the N-terminus, the 306-residue chain is NAD kinase 1 (306 aa).

D67 functions as the Proton acceptor in the catalytic mechanism. Residues 67-68 (DG), 149-150 (NE), D181, and 192-197 (TGYTVS) contribute to the NAD(+) site.

Belongs to the NAD kinase family. A divalent metal cation is required as a cofactor.

Its subcellular location is the cytoplasm. The enzyme catalyses NAD(+) + ATP = ADP + NADP(+) + H(+). Functionally, involved in the regulation of the intracellular balance of NAD and NADP, and is a key enzyme in the biosynthesis of NADP. Catalyzes specifically the phosphorylation on 2'-hydroxyl of the adenosine moiety of NAD to yield NADP. The polypeptide is NAD kinase 1 (Trichormus variabilis (strain ATCC 29413 / PCC 7937) (Anabaena variabilis)).